A 334-amino-acid chain; its full sequence is Probable 2-ketogluconate reductase (334 aa).

NAD(+) is bound by residues 164–165, 244–246, and Asp-270; these read RI and AGR. Arg-246 is a catalytic residue. Glu-275 is a catalytic residue. His-294 serves as the catalytic Proton donor. 294-297 is an NAD(+) binding site; that stretch reads HIGT.

This sequence belongs to the D-isomer specific 2-hydroxyacid dehydrogenase family.

The protein localises to the cytoplasm. The catalysed reaction is D-gluconate + NADP(+) = 2-dehydro-D-gluconate + NADPH + H(+). In terms of biological role, catalyzes the NADPH-dependent reduction of 2,5-diketo-D-gluconate (25DKG) to 5-keto-D-gluconate (5KDG), 2-keto-D-gluconate (2KDG) to D-gluconate, and 2-keto-L-gulonate (2KLG) to L-idonate (IA). The protein is Probable 2-ketogluconate reductase (tkrA) of Dictyostelium discoideum (Social amoeba).